A 105-amino-acid chain; its full sequence is Replication initiation control protein YabA (105 aa).

Zn(2+) is bound by residues histidine 79, cysteine 81, cysteine 95, and cysteine 98.

Belongs to the YabA family. As to quaternary structure, homotetramer. Interacts with both DnaA and DnaN, acting as a bridge between these two proteins. It depends on Zn(2+) as a cofactor.

The protein localises to the cytoplasm. The protein resides in the nucleoid. Its function is as follows. Involved in control of chromosome replication initiation. Inhibits the cooperative binding of DnaA to the oriC region, thus negatively regulating initiation of chromosome replication. Inhibits the ability of DnaA-ATP to form a helix on DNA; does not disassemble preformed DnaA-DNA helices. Decreases the residence time of DnaA on the chromosome at its binding sites (oriC, replication forks and promoter-binding sites). Tethers DnaA to the replication machinery via the DNA polymerase beta sliding clamp subunit (dnaN). Associates with oriC and other DnaA targets on the chromosome in a DnaA-dependent manner. This chain is Replication initiation control protein YabA, found in Streptococcus suis (strain 98HAH33).